A 319-amino-acid polypeptide reads, in one-letter code: 7,8-didemethyl-8-hydroxy-5-deazariboflavin synthase (319 aa).

The region spanning 6–236 is the Radical SAM core domain; that stretch reads VTYSPAFTLV…AEITIQIPPN (231 aa). The [4Fe-4S] cluster site is built by C20, C24, and C27.

The protein belongs to the radical SAM superfamily. CofG family. Consists of two subunits, CofG and CofH. Requires [4Fe-4S] cluster as cofactor.

It catalyses the reaction 5-amino-5-(4-hydroxybenzyl)-6-(D-ribitylimino)-5,6-dihydrouracil + S-adenosyl-L-methionine = 7,8-didemethyl-8-hydroxy-5-deazariboflavin + 5'-deoxyadenosine + L-methionine + NH4(+) + H(+). It participates in cofactor biosynthesis; coenzyme F0 biosynthesis. In terms of biological role, catalyzes the radical-mediated synthesis of 7,8-didemethyl-8-hydroxy-5-deazariboflavin from 5-amino-5-(4-hydroxybenzyl)-6-(D-ribitylimino)-5,6-dihydrouracil. This is 7,8-didemethyl-8-hydroxy-5-deazariboflavin synthase from Gloeobacter violaceus (strain ATCC 29082 / PCC 7421).